The sequence spans 249 residues: Long form salivary protein D7L (249 aa).

An N-terminal signal peptide occupies residues 1-19; the sequence is MNAVITSLVFISLVGVGYS. 2 disulfide bridges follow: C36/C66 and C62/C112. W49 serves as a coordination point for thromboxane A2. W52 serves as a coordination point for leukotriene C4. A thromboxane A2-binding site is contributed by Y63. G136 and K154 together coordinate leukotriene C4. K154 lines the thromboxane A2 pocket. 3 cysteine pairs are disulfide-bonded: C162/C178, C174/C221, and C211/C230.

This sequence belongs to the PBP/GOBP family.

Its subcellular location is the secreted. Modulates blood feeding of female sandflies on vertebrate species by binding and sequestering different mediators involved in the host response. Binds leukotriene C4, leukotriene D4, leukotriene E4 and U-46619, a stable analog of thromboxane A2. Does not bind histamine or serotonin. Inhibits platelet aggregation induced by low concentrations of collagen in thromboxane A2-dependent manner. This is Long form salivary protein D7L from Phlebotomus duboscqi (Sandfly).